We begin with the raw amino-acid sequence, 372 residues long: GDP-mannose 4,6 dehydratase (372 aa).

Residues 1 to 20 (MAHAPARCPSARGSGDGEMG) are disordered. At A2 the chain carries N-acetylalanine. NADP(+) contacts are provided by residues 30–35 (GITGQD), 55–58 (RRSS), 86–87 (DL), 108–112 (LGAQS), and Y123. Residue T155 is part of the active site. Active-site nucleophile residues include E157 and Y179. NADP(+)-binding residues include K183, H209, and R214. A Phosphotyrosine modification is found at Y323.

Belongs to the NAD(P)-dependent epimerase/dehydratase family. GDP-mannose 4,6-dehydratase subfamily. NADP(+) serves as cofactor. In terms of tissue distribution, highly expressed in pancreas and small intestine. Expressed in thymus, protstate, colon, heart, placenta, liver and kidney. Expressed at low levels in spleen, testis, brain and lung.

The catalysed reaction is GDP-alpha-D-mannose = GDP-4-dehydro-alpha-D-rhamnose + H2O. The protein operates within nucleotide-sugar biosynthesis; GDP-L-fucose biosynthesis via de novo pathway; GDP-L-fucose from GDP-alpha-D-mannose: step 1/2. Inhibited by GDP-fucose. Functionally, catalyzes the conversion of GDP-D-mannose to GDP-4-dehydro-6-deoxy-D-mannose. In Homo sapiens (Human), this protein is GDP-mannose 4,6 dehydratase.